The primary structure comprises 347 residues: tRNA pseudouridine synthase D (347 aa).

The active-site Nucleophile is D81. Positions 158–305 (GVPNYFGSQR…RHDRREIALK (148 aa)) constitute a TRUD domain.

The protein belongs to the pseudouridine synthase TruD family.

It carries out the reaction uridine(13) in tRNA = pseudouridine(13) in tRNA. Its function is as follows. Responsible for synthesis of pseudouridine from uracil-13 in transfer RNAs. The polypeptide is tRNA pseudouridine synthase D (Vibrio parahaemolyticus serotype O3:K6 (strain RIMD 2210633)).